A 611-amino-acid polypeptide reads, in one-letter code: Leukotriene A-4 hydrolase (611 aa).

K73 is subject to N6-acetyllysine. A peptide contacts are provided by residues Q135–Q137 and S267–E272. H296 is a binding site for Zn(2+). Catalysis depends on E297, which acts as the Proton acceptor. Zn(2+) is bound by residues H300 and E319. Position 337 is an N6-acetyllysine (K337). Y384 acts as the Proton donor in catalysis. The residue at position 414 (K414) is an N6-acetyllysine. S416 is subject to Phosphoserine. R564–K566 serves as a coordination point for a peptide. Residue K573 is modified to N6-acetyllysine.

This sequence belongs to the peptidase M1 family. In terms of assembly, monomer. Zn(2+) is required as a cofactor. In terms of processing, phosphorylation at Ser-416 inhibits leukotriene-A4 hydrolase activity. activity.

The protein resides in the cytoplasm. The enzyme catalyses leukotriene A4 + H2O = leukotriene B4. It carries out the reaction (5S,6S)-epoxy-(18R)-hydroxy-(7E,9E,11Z,14Z,16E)-eicosapentaenoate + H2O = resolvin E1. The catalysed reaction is (5S,6S)-epoxy-(18S)-hydroxy-(7E,9E,11Z,14Z,16E)-eicosapentaenoate + H2O = 18S-resolvin E1. It catalyses the reaction Release of the N-terminal residue from a tripeptide.. It participates in lipid metabolism; leukotriene B4 biosynthesis. Its activity is regulated as follows. Inhibited by bestatin. The epoxide hydrolase activity is restrained by suicide inactivation that involves binding of LTA4 to Tyr-379. 4-(4-benzylphenyl)thiazol-2-amine (ARM1) selectively inhibits the epoxide hydrolase activity. In terms of biological role, bifunctional zinc metalloenzyme that comprises both epoxide hydrolase (EH) and aminopeptidase activities. Acts as an epoxide hydrolase to catalyze the conversion of LTA4 to the pro-inflammatory mediator leukotriene B4 (LTB4). Also has aminopeptidase activity, with high affinity for N-terminal arginines of various synthetic tripeptides. In addition to its pro-inflammatory EH activity, may also counteract inflammation by its aminopeptidase activity, which inactivates by cleavage another neutrophil attractant, the tripeptide Pro-Gly-Pro (PGP), a bioactive fragment of collagen generated by the action of matrix metalloproteinase-9 (MMP9) and prolylendopeptidase (PREPL). Involved also in the biosynthesis of resolvin E1 and 18S-resolvin E1 from eicosapentaenoic acid, two lipid mediators that show potent anti-inflammatory and pro-resolving actions. The protein is Leukotriene A-4 hydrolase (LTA4H) of Cavia porcellus (Guinea pig).